A 341-amino-acid chain; its full sequence is Spore photoproduct lyase (341 aa).

Residues 76–304 (SKPSAEYAIP…ESKRKYKWGR (229 aa)) form the Radical SAM core domain. The [4Fe-4S] cluster site is built by Cys90, Cys94, and Cys97. Residues 217–234 (QAARKVAGAGYKLGFVVA) constitute a DNA-binding region (H-T-H motif).

Belongs to the radical SAM superfamily. SPL family. Monomer or homodimer. [4Fe-4S] cluster is required as a cofactor. Requires S-adenosyl-L-methionine as cofactor.

The catalysed reaction is (5R)-5,6-dihydro-5-(thymidin-7-yl)thymidine in DNA = a thymidine dimer in DNA. In terms of biological role, involved in repair of UV radiation-induced DNA damage during spore germination. Can repair thymine dimer 5-thyminyl-5,6-dihydrothymine (known as spore photoproduct (SP)) by in situ monomerization of SP to two thymines. The polypeptide is Spore photoproduct lyase (splG) (Geobacillus sp. (strain Y412MC61)).